The primary structure comprises 233 residues: Phosphoenolpyruvate guanylyltransferase 1 (233 aa).

Phosphoenolpyruvate contacts are provided by Thr-154, Gly-171, and Ser-174.

The protein belongs to the CofC family.

It carries out the reaction phosphoenolpyruvate + GTP + H(+) = enolpyruvoyl-2-diphospho-5'-guanosine + diphosphate. The protein operates within cofactor biosynthesis; coenzyme F420 biosynthesis. In terms of biological role, guanylyltransferase that catalyzes the activation of phosphoenolpyruvate (PEP) as enolpyruvoyl-2-diphospho-5'-guanosine, via the condensation of PEP with GTP. It is involved in the biosynthesis of coenzyme F420, a hydride carrier cofactor. This chain is Phosphoenolpyruvate guanylyltransferase 1, found in Rhodococcus jostii (strain RHA1).